The primary structure comprises 311 residues: Malate dehydrogenase (311 aa).

Residues 7–13 and Asp34 contribute to the NAD(+) site; that span reads GAAGGIG. Residues Arg81 and Arg87 each contribute to the substrate site. NAD(+) contacts are provided by residues Asn94 and 117-119; that span reads ITN. Substrate-binding residues include Asn119 and Arg153. His177 acts as the Proton acceptor in catalysis. Residue Met227 coordinates NAD(+).

It belongs to the LDH/MDH superfamily. MDH type 1 family. In terms of assembly, homodimer.

It catalyses the reaction (S)-malate + NAD(+) = oxaloacetate + NADH + H(+). Functionally, catalyzes the reversible oxidation of malate to oxaloacetate. The protein is Malate dehydrogenase of Erwinia tasmaniensis (strain DSM 17950 / CFBP 7177 / CIP 109463 / NCPPB 4357 / Et1/99).